Here is a 216-residue protein sequence, read N- to C-terminus: Probable GTP-binding protein EngB (216 aa).

The EngB-type G domain maps to 23-197 (EGAEIAFAGR…EHKVAGWLGL (175 aa)). GTP-binding positions include 31–38 (GRSNAGKS), 58–62 (GRTQL), 76–79 (DLPG), 143–146 (TKCD), and 176–178 (FSS). The Mg(2+) site is built by Ser38 and Thr60.

Belongs to the TRAFAC class TrmE-Era-EngA-EngB-Septin-like GTPase superfamily. EngB GTPase family. Requires Mg(2+) as cofactor.

In terms of biological role, necessary for normal cell division and for the maintenance of normal septation. The chain is Probable GTP-binding protein EngB from Aromatoleum aromaticum (strain DSM 19018 / LMG 30748 / EbN1) (Azoarcus sp. (strain EbN1)).